We begin with the raw amino-acid sequence, 138 residues long: Ergosterol biosynthetic protein 28 (138 aa).

A helical membrane pass occupies residues 17–33; it reads LPYWLLFISVVSIFNSV. An N-linked (GlcNAc...) asparagine glycan is attached at Asn-40. The next 3 membrane-spanning stretches (helical) occupy residues 56 to 75, 87 to 107, and 114 to 131; these read LSAR…RFYG, LTQF…LYFG, and GLSG…WMYL.

Belongs to the ERG28 family. As to quaternary structure, heterotetramer of ERG25, ERG26, ERG27 and ERG28. ERG28 acts as a scaffold to tether ERG27 and other 4,4-demethylation-related enzymes, forming a demethylation enzyme complex, in the endoplasmic reticulum. Interacts with ERG25, ERG26 and ERG27. Also interacts with ERG1, ERG3, ERG5, ERG6 and ERG11.

It is found in the endoplasmic reticulum membrane. Part of the third module of ergosterol biosynthesis pathway that includes the late steps of the pathway. ERG28 has a role as a scaffold to help anchor the catalytic components of the C-4 demethylation complex ERG25, ERG26 and ERG27 to the endoplasmic reticulum. The third module or late pathway involves the ergosterol synthesis itself through consecutive reactions that mainly occur in the endoplasmic reticulum (ER) membrane. Firstly, the squalene synthase ERG9 catalyzes the condensation of 2 farnesyl pyrophosphate moieties to form squalene, which is the precursor of all steroids. Squalene synthase is crucial for balancing the incorporation of farnesyl diphosphate (FPP) into sterol and nonsterol isoprene synthesis. Secondly, the squalene epoxidase ERG1 catalyzes the stereospecific oxidation of squalene to (S)-2,3-epoxysqualene, which is considered to be a rate-limiting enzyme in steroid biosynthesis. Then, the lanosterol synthase ERG7 catalyzes the cyclization of (S)-2,3 oxidosqualene to lanosterol, a reaction that forms the sterol core. In the next steps, lanosterol is transformed to zymosterol through a complex process involving various demethylation, reduction and desaturation reactions. The lanosterol 14-alpha-demethylase ERG11 (also known as CYP51) catalyzes C14-demethylation of lanosterol to produce 4,4'-dimethyl cholesta-8,14,24-triene-3-beta-ol, which is critical for ergosterol biosynthesis. The C-14 reductase ERG24 reduces the C14=C15 double bond of 4,4-dimethyl-cholesta-8,14,24-trienol to produce 4,4-dimethyl-cholesta-8,24-dienol. 4,4-dimethyl-cholesta-8,24-dienol is substrate of the C-4 demethylation complex ERG25-ERG26-ERG27 in which ERG25 catalyzes the three-step monooxygenation required for the demethylation of 4,4-dimethyl and 4alpha-methylsterols, ERG26 catalyzes the oxidative decarboxylation that results in a reduction of the 3-beta-hydroxy group at the C-3 carbon to an oxo group, and ERG27 is responsible for the reduction of the keto group on the C-3. ERG28 has a role as a scaffold to help anchor ERG25, ERG26 and ERG27 to the endoplasmic reticulum and ERG29 regulates the activity of the iron-containing C4-methylsterol oxidase ERG25. Then, the sterol 24-C-methyltransferase ERG6 catalyzes the methyl transfer from S-adenosyl-methionine to the C-24 of zymosterol to form fecosterol. The C-8 sterol isomerase ERG2 catalyzes the reaction which results in unsaturation at C-7 in the B ring of sterols and thus converts fecosterol to episterol. The sterol-C5-desaturase ERG3 then catalyzes the introduction of a C-5 double bond in the B ring to produce 5-dehydroepisterol. The C-22 sterol desaturase ERG5 further converts 5-dehydroepisterol into ergosta-5,7,22,24(28)-tetraen-3beta-ol by forming the C-22(23) double bond in the sterol side chain. Finally, ergosta-5,7,22,24(28)-tetraen-3beta-ol is substrate of the C-24(28) sterol reductase ERG4 to produce ergosterol. The chain is Ergosterol biosynthetic protein 28 from Candida albicans (strain SC5314 / ATCC MYA-2876) (Yeast).